We begin with the raw amino-acid sequence, 430 residues long: UDP-N-acetylglucosamine 1-carboxyvinyltransferase (430 aa).

22–23 contacts phosphoenolpyruvate; it reads KN. Arg102 serves as a coordination point for UDP-N-acetyl-alpha-D-glucosamine. The active-site Proton donor is Cys126. Cys126 is modified (2-(S-cysteinyl)pyruvic acid O-phosphothioketal). Residues 131 to 135, 172 to 175, Asp317, and Ile339 contribute to the UDP-N-acetyl-alpha-D-glucosamine site; these read RPVDL and KVSV.

This sequence belongs to the EPSP synthase family. MurA subfamily.

It is found in the cytoplasm. It catalyses the reaction phosphoenolpyruvate + UDP-N-acetyl-alpha-D-glucosamine = UDP-N-acetyl-3-O-(1-carboxyvinyl)-alpha-D-glucosamine + phosphate. The protein operates within cell wall biogenesis; peptidoglycan biosynthesis. Functionally, cell wall formation. Adds enolpyruvyl to UDP-N-acetylglucosamine. This Rhizobium etli (strain CIAT 652) protein is UDP-N-acetylglucosamine 1-carboxyvinyltransferase.